The chain runs to 373 residues: Queuine tRNA-ribosyltransferase (373 aa).

Asp-94 functions as the Proton acceptor in the catalytic mechanism. Substrate-binding positions include 94-98 (DSGGF), Asp-148, Gln-191, and Gly-218. An RNA binding region spans residues 249–255 (GVGTPDY). Asp-268 functions as the Nucleophile in the catalytic mechanism. An RNA binding; important for wobble base 34 recognition region spans residues 273 to 277 (TRIGR). Residues Cys-306, Cys-308, Cys-311, and His-337 each contribute to the Zn(2+) site.

This sequence belongs to the queuine tRNA-ribosyltransferase family. In terms of assembly, homodimer. Within each dimer, one monomer is responsible for RNA recognition and catalysis, while the other monomer binds to the replacement base PreQ1. Zn(2+) serves as cofactor.

The enzyme catalyses 7-aminomethyl-7-carbaguanine + guanosine(34) in tRNA = 7-aminomethyl-7-carbaguanosine(34) in tRNA + guanine. The protein operates within tRNA modification; tRNA-queuosine biosynthesis. In terms of biological role, catalyzes the base-exchange of a guanine (G) residue with the queuine precursor 7-aminomethyl-7-deazaguanine (PreQ1) at position 34 (anticodon wobble position) in tRNAs with GU(N) anticodons (tRNA-Asp, -Asn, -His and -Tyr). Catalysis occurs through a double-displacement mechanism. The nucleophile active site attacks the C1' of nucleotide 34 to detach the guanine base from the RNA, forming a covalent enzyme-RNA intermediate. The proton acceptor active site deprotonates the incoming PreQ1, allowing a nucleophilic attack on the C1' of the ribose to form the product. After dissociation, two additional enzymatic reactions on the tRNA convert PreQ1 to queuine (Q), resulting in the hypermodified nucleoside queuosine (7-(((4,5-cis-dihydroxy-2-cyclopenten-1-yl)amino)methyl)-7-deazaguanosine). The protein is Queuine tRNA-ribosyltransferase of Ruminiclostridium cellulolyticum (strain ATCC 35319 / DSM 5812 / JCM 6584 / H10) (Clostridium cellulolyticum).